The chain runs to 205 residues: uncharacterized protein (205 aa).

The segment at 1–42 is disordered; it reads MSRKRDKPYTNRHTPARISKRRRPWAPSSSEHDEIIDKPITK. The span at 14 to 24 shows a compositional bias: basic residues; the sequence is TPARISKRRRP. Over residues 30–40 the composition is skewed to basic and acidic residues; it reads SEHDEIIDKPI. Positions 47-122 constitute an RRM domain; that stretch reads PALVVMGLPA…KKLEVVWATD (76 aa). The segment at 170–191 is disordered; that stretch reads PRSDNTKGISGDGGISSPATTS.

This is an uncharacterized protein from Arabidopsis thaliana (Mouse-ear cress).